Consider the following 273-residue polypeptide: MALNSINTNSGALIALQNLNSTNAELTQVQQRINTGKKIGSAKDNGAIWATAKNQSATANSMNAVKDSLQRGQSTIDVALAAGDTITDLLGKMKEKALAASDTSLNTASFNALKSDFDSLRDQITKAASNAKFNGVSIANGSTAKLTFLANSDGSGFTVTAKTLTLTGLGLTASSTFTTAAAAKTMIGTIDTALQTATNKLASLGTSSTGLDTHLTFVGKLQDSLDAGVGNLVDADLAKESAKLQSLQTKQQLGVQALSIANSSSSAILSLFR.

This sequence belongs to the bacterial flagellin family. In C.crescentus, the flagellar filament is composed of multiple flagellins of 29 kDa; 27 kDa and 25 kDa.

It is found in the secreted. The protein resides in the bacterial flagellum. Functionally, flagellin is the subunit protein which polymerizes to form the filaments of bacterial flagella. The sequence is that of Flagellin FljN (fljN) from Caulobacter vibrioides (strain ATCC 19089 / CIP 103742 / CB 15) (Caulobacter crescentus).